A 125-amino-acid polypeptide reads, in one-letter code: Flagellar protein FliT (125 aa).

Residues 1 to 50 (MDNKMDLLSAYQRILSLSEQMLNLAKNEKWDELVDMEITYLKAVEVISHS) form a required for homodimerization region. Positions 60–98 (LQQKMTNILQIILDNENEIKKLLQKRLDELSKLIKQASQ) are fliD binding.

The protein belongs to the FliT family. In terms of assembly, homodimer. Interacts with FliD and FlhC.

The protein resides in the cytoplasm. It localises to the cytosol. Functionally, dual-function protein that regulates the transcription of class 2 flagellar operons and that also acts as an export chaperone for the filament-capping protein FliD. As a transcriptional regulator, acts as an anti-FlhDC factor; it directly binds FlhC, thus inhibiting the binding of the FlhC/FlhD complex to class 2 promoters, resulting in decreased expression of class 2 flagellar operons. As a chaperone, effects FliD transition to the membrane by preventing its premature polymerization, and by directing it to the export apparatus. The polypeptide is Flagellar protein FliT (Photorhabdus laumondii subsp. laumondii (strain DSM 15139 / CIP 105565 / TT01) (Photorhabdus luminescens subsp. laumondii)).